The primary structure comprises 268 residues: Calpain small subunit 1 (268 aa).

Met-1 is subject to N-acetylmethionine. Ser-6 is modified (phosphoserine). The region spanning 91–125 (EANESEEVRQFRRLFAQLAGDDMEVSATELMNILN) is the EF-hand 1; atypical domain. The Ca(2+) site is built by Ala-109, Asp-112, Glu-114, Glu-119, Asp-137, Asp-152, Asp-154, Thr-156, Lys-158, and Glu-163. EF-hand domains lie at 139–172 (FGID…NNIK), 169–204 (NNIK…AGFH), 205–233 (LNEH…ISCL), and 234–268 (VRLD…TMYS). Lys-179 bears the N6-acetyllysine mark. Residues Asp-182, Asp-184, Ser-186, Thr-188, Glu-193, and Asp-225 each coordinate Ca(2+).

As to quaternary structure, homodimer or heterodimer of a large (catalytic) and a small (regulatory) subunit. In presence of calcium, the heterodimer dissociates.

Its subcellular location is the cytoplasm. It is found in the cell membrane. Functionally, regulatory subunit of the calcium-regulated non-lysosomal thiol-protease which catalyzes limited proteolysis of substrates involved in cytoskeletal remodeling and signal transduction. Essential for embryonic development. This is Calpain small subunit 1 (CAPNS1) from Homo sapiens (Human).